A 459-amino-acid chain; its full sequence is Mitochondrial distribution and morphology protein 10 (459 aa).

It belongs to the MDM10 family. As to quaternary structure, component of the ER-mitochondria encounter structure (ERMES) or MDM complex, composed of MMM1, MDM10, MDM12 and MDM34. Associates with the mitochondrial outer membrane sorting assembly machinery SAM(core) complex.

The protein localises to the mitochondrion outer membrane. Functionally, component of the ERMES/MDM complex, which serves as a molecular tether to connect the endoplasmic reticulum and mitochondria. Components of this complex are involved in the control of mitochondrial shape and protein biogenesis and may function in phospholipid exchange. MDM10 is involved in the late assembly steps of the general translocase of the mitochondrial outer membrane (TOM complex). Functions in the TOM40-specific route of the assembly of outer membrane beta-barrel proteins, including the association of TOM40 with the receptor TOM22 and small TOM proteins. Can associate with the SAM(core) complex as well as the MDM12-MMM1 complex, both involved in late steps of the major beta-barrel assembly pathway, that is responsible for biogenesis of all outer membrane beta-barrel proteins. May act as a switch that shuttles between both complexes and channels precursor proteins into the TOM40-specific pathway. Plays a role in mitochondrial morphology and in the inheritance of mitochondria. The sequence is that of Mitochondrial distribution and morphology protein 10 from Clavispora lusitaniae (strain ATCC 42720) (Yeast).